Consider the following 277-residue polypeptide: UBX domain-containing protein 8 (277 aa).

Residue Met1 is a topological domain, cytoplasmic. The helical transmembrane segment at 2-22 (ASRGVVGLFLLSALPLLCLEL) threads the bilayer. The Lumenal segment spans residues 23–33 (RRGIPSLGIKD). A helical transmembrane segment spans residues 34–54 (LILLSGRIFLLLALLTLVISV). The Cytoplasmic portion of the chain corresponds to 55–277 (TTSWFNSLKP…NVEEKEQSSQ (223 aa)). The tract at residues 64–89 (PSQGHLKEGEKENEKRRRLVRERQQE) is disordered. The span at 68 to 89 (HLKEGEKENEKRRRLVRERQQE) shows a compositional bias: basic and acidic residues. The 77-residue stretch at 193 to 269 (TAEEVVTVAL…GITVDTVLNV (77 aa)) folds into the UBX domain.

As to quaternary structure, interacts with SYVN1 and VCP. In terms of tissue distribution, highly expressed in gonads. In testis, expressed in post-meiotic round spermatids, while in ovaries it is expressed in granulosa cells.

The protein resides in the endoplasmic reticulum membrane. Its function is as follows. Involved in endoplasmic reticulum-associated degradation (ERAD) for misfolded lumenal proteins, possibly by tethering VCP to the endoplasmic reticulum membrane. May play a role in reproduction. This is UBX domain-containing protein 8 (Ubxn8) from Mus musculus (Mouse).